We begin with the raw amino-acid sequence, 214 residues long: Thioredoxin-like 4, chloroplastic (214 aa).

Over residues 1-20 the composition is skewed to low complexity; that stretch reads MITASLLPLPATSSSSGRRS. Residues 1-68 are disordered; the sequence is MITASLLPLP…STNGSLPGLP (68 aa). Residues 1-71 constitute a chloroplast transit peptide; sequence MITASLLPLP…GSLPGLPPVV (71 aa). The span at 21 to 34 shows a compositional bias: pro residues; sequence LPPPTTTFPRPPPP. Residues 42–53 are compositionally biased toward low complexity; it reads SSSSSSASSTES. Residues 72–199 enclose the Thioredoxin domain; the sequence is VEEEEEEFCP…IIAAIQKYTA (128 aa). Catalysis depends on nucleophile residues cysteine 117 and cysteine 120. A disulfide bridge connects residues cysteine 117 and cysteine 120.

Belongs to the thioredoxin family.

The protein localises to the plastid. The protein resides in the chloroplast. Probable thiol-disulfide oxidoreductase that may participate in various redox reactions. The chain is Thioredoxin-like 4, chloroplastic from Oryza sativa subsp. japonica (Rice).